Here is a 273-residue protein sequence, read N- to C-terminus: Dermonecrotic toxin LruSicTox-alphaIC1d (273 aa).

His5 is a catalytic residue. 2 residues coordinate Mg(2+): Glu25 and Asp27. His41 serves as the catalytic Nucleophile. 2 disulfide bridges follow: Cys45/Cys51 and Cys47/Cys190. Asp85 is a binding site for Mg(2+).

This sequence belongs to the arthropod phospholipase D family. Class II subfamily. The cofactor is Mg(2+). Expressed by the venom gland.

Its subcellular location is the secreted. The enzyme catalyses an N-(acyl)-sphingosylphosphocholine = an N-(acyl)-sphingosyl-1,3-cyclic phosphate + choline. The catalysed reaction is an N-(acyl)-sphingosylphosphoethanolamine = an N-(acyl)-sphingosyl-1,3-cyclic phosphate + ethanolamine. It catalyses the reaction a 1-acyl-sn-glycero-3-phosphocholine = a 1-acyl-sn-glycero-2,3-cyclic phosphate + choline. It carries out the reaction a 1-acyl-sn-glycero-3-phosphoethanolamine = a 1-acyl-sn-glycero-2,3-cyclic phosphate + ethanolamine. Dermonecrotic toxins cleave the phosphodiester linkage between the phosphate and headgroup of certain phospholipids (sphingolipid and lysolipid substrates), forming an alcohol (often choline) and a cyclic phosphate. This toxin acts on sphingomyelin (SM). It may also act on ceramide phosphoethanolamine (CPE), lysophosphatidylcholine (LPC) and lysophosphatidylethanolamine (LPE), but not on lysophosphatidylserine (LPS), and lysophosphatidylglycerol (LPG). It acts by transphosphatidylation, releasing exclusively cyclic phosphate products as second products. Induces dermonecrosis, hemolysis, increased vascular permeability, edema, inflammatory response, and platelet aggregation. The polypeptide is Dermonecrotic toxin LruSicTox-alphaIC1d (Loxosceles rufescens (Mediterranean recluse spider)).